We begin with the raw amino-acid sequence, 89 residues long: Small ribosomal subunit protein uS14A (89 aa).

It belongs to the universal ribosomal protein uS14 family. As to quaternary structure, part of the 30S ribosomal subunit. Contacts proteins S3 and S10.

In terms of biological role, binds 16S rRNA, required for the assembly of 30S particles and may also be responsible for determining the conformation of the 16S rRNA at the A site. The chain is Small ribosomal subunit protein uS14A from Lactiplantibacillus plantarum (strain ATCC BAA-793 / NCIMB 8826 / WCFS1) (Lactobacillus plantarum).